The following is a 1462-amino-acid chain: DNA polymerase alpha catalytic subunit (1462 aa).

Disordered stretches follow at residues 1-33 (MAPV…GRQE) and 98-123 (DLED…KRNV). Positions 20 to 29 (RARREKKSKK) are enriched in basic residues. Residues 106–116 (ADEKGKDGKAR) are compositionally biased toward basic and acidic residues. The residue at position 174 (Thr174) is a Phosphothreonine. A phosphoserine mark is found at Ser186, Ser190, and Ser209. Lys224 carries the post-translational modification N6-acetyllysine. Residues 232–251 (DVQVESTEEEQESGAMEFED) form a disordered region. Thr406 is modified (phosphothreonine). Residues 650–715 (RINVCKAPHW…YHLSELVQQI (66 aa)) form a DNA-binding region. N6-succinyllysine is present on Lys970. Residues 1245–1376 (QFRVHHYHKD…TGPLCPACMK (132 aa)) form a DNA-binding region. Residues Cys1283, Cys1286, Cys1310, Cys1315, Cys1348, Cys1353, Cys1371, and Cys1374 each coordinate Zn(2+). A CysA-type zinc finger spans residues 1283 to 1318 (CPTCGTENIYDNVFDGSGTDMEPSLYRCSNIDCKAS). The CysB motif motif lies at 1348 to 1374 (CEEPTCRNRTRHLPLQFSRTGPLCPAC).

It belongs to the DNA polymerase type-B family. As to quaternary structure, component of the alpha DNA polymerase complex (also known as the alpha DNA polymerase-primase complex) consisting of four subunits: the catalytic subunit POLA1, the regulatory subunit POLA2, and the primase complex subunits PRIM1 and PRIM2 respectively. Interacts with PARP1; this interaction functions as part of the control of replication fork progression. Interacts with MCM10 and WDHD1; these interactions recruit the polymerase alpha complex to the pre-replicative complex bound to DNA. Interacts with RPA1; this interaction stabilizes the replicative complex and reduces the misincorporation rate of DNA polymerase alpha by acting as a fidelity clamp. In terms of assembly, (Microbial infection) Interacts with SV40 Large T antigen; this interaction allows viral DNA replication. (Microbial infection) Interacts with herpes simplex virus 1/HHV-1 replication origin-binding protein UL9. In terms of processing, a 165 kDa form is probably produced by proteolytic cleavage at Lys-124.

It is found in the nucleus. It localises to the cytoplasm. The protein localises to the cytosol. It carries out the reaction DNA(n) + a 2'-deoxyribonucleoside 5'-triphosphate = DNA(n+1) + diphosphate. With respect to regulation, autoinhibited in apo-primosome, where the zinc motif of POLA1 and oligonucleotide/olicosaccharide-binding domain of POLA2 are placed into the active site blocking RNA:DNA duplex entry. Functionally, catalytic subunit of the DNA polymerase alpha complex (also known as the alpha DNA polymerase-primase complex) which plays an essential role in the initiation of DNA synthesis. During the S phase of the cell cycle, the DNA polymerase alpha complex (composed of a catalytic subunit POLA1, a regulatory subunit POLA2 and two primase subunits PRIM1 and PRIM2) is recruited to DNA at the replicative forks via direct interactions with MCM10 and WDHD1. The primase subunit of the polymerase alpha complex initiates DNA synthesis by oligomerising short RNA primers on both leading and lagging strands. These primers are initially extended by the polymerase alpha catalytic subunit and subsequently transferred to polymerase delta and polymerase epsilon for processive synthesis on the lagging and leading strand, respectively. The reason this transfer occurs is because the polymerase alpha has limited processivity and lacks intrinsic 3' exonuclease activity for proofreading error, and therefore is not well suited for replicating long complexes. In the cytosol, responsible for a substantial proportion of the physiological concentration of cytosolic RNA:DNA hybrids, which are necessary to prevent spontaneous activation of type I interferon responses. This chain is DNA polymerase alpha catalytic subunit (POLA1), found in Homo sapiens (Human).